The primary structure comprises 325 residues: Envelope protein H3 (325 aa).

The Virion surface portion of the chain corresponds to 1–285 (MATVNKTPVI…FTTPLISFFG (285 aa)). Residues 286 to 306 (LFDINVIGLIVILFIMFMLIF) form a helical; Signal-anchor membrane-spanning segment. At 307–325 (NVKSKLLWFLTGTFVTAFI) the chain is on the intravirion side.

Belongs to the orthopoxvirus OPG108 family. In terms of processing, does not contain disulfide bonds.

It localises to the virion membrane. Its function is as follows. Envelope protein that binds to heparan sulfate on the cell surface and might provide virion attachment to target cell. This Variola virus (isolate Human/India/Ind3/1967) (VARV) protein is Envelope protein H3 (OPG108).